The primary structure comprises 280 residues: Thymidylate synthase (280 aa).

Arg21 contacts dUMP. A (6R)-5,10-methylene-5,6,7,8-tetrahydrofolate-binding site is contributed by His51. A dUMP-binding site is contributed by 142 to 143 (RR). The active-site Nucleophile is the Cys162. DUMP contacts are provided by residues 182–185 (RSAD), Asn193, and 223–225 (HLY). Asp185 provides a ligand contact to (6R)-5,10-methylene-5,6,7,8-tetrahydrofolate. Ala279 provides a ligand contact to (6R)-5,10-methylene-5,6,7,8-tetrahydrofolate.

It belongs to the thymidylate synthase family. Bacterial-type ThyA subfamily. In terms of assembly, homodimer.

Its subcellular location is the cytoplasm. The catalysed reaction is dUMP + (6R)-5,10-methylene-5,6,7,8-tetrahydrofolate = 7,8-dihydrofolate + dTMP. Its pathway is pyrimidine metabolism; dTTP biosynthesis. Catalyzes the reductive methylation of 2'-deoxyuridine-5'-monophosphate (dUMP) to 2'-deoxythymidine-5'-monophosphate (dTMP) while utilizing 5,10-methylenetetrahydrofolate (mTHF) as the methyl donor and reductant in the reaction, yielding dihydrofolate (DHF) as a by-product. This enzymatic reaction provides an intracellular de novo source of dTMP, an essential precursor for DNA biosynthesis. This chain is Thymidylate synthase, found in Acinetobacter baylyi (strain ATCC 33305 / BD413 / ADP1).